The sequence spans 190 residues: TATA-box-binding protein (190 aa).

Tandem repeats lie at residues 11 to 87 and 102 to 178.

It belongs to the TBP family.

In terms of biological role, general factor that plays a role in the activation of archaeal genes transcribed by RNA polymerase. Binds specifically to the TATA box promoter element which lies close to the position of transcription initiation. The protein is TATA-box-binding protein (tbp) of Thermococcus kodakarensis (strain ATCC BAA-918 / JCM 12380 / KOD1) (Pyrococcus kodakaraensis (strain KOD1)).